We begin with the raw amino-acid sequence, 129 residues long: Follitropin subunit beta (129 aa).

Residues 1–18 (MKSVQFCFLFCCWRATCC) form the signal peptide. Cystine bridges form between cysteine 21–cysteine 69, cysteine 35–cysteine 84, cysteine 38–cysteine 122, cysteine 46–cysteine 100, cysteine 50–cysteine 102, and cysteine 105–cysteine 112. Residues asparagine 25 and asparagine 42 are each glycosylated (N-linked (GlcNAc...) asparagine).

Belongs to the glycoprotein hormones subunit beta family. Heterodimer. The active follitropin is a heterodimer composed of an alpha chain/CGA shared with other hormones and a unique beta chain/FSHB shown here.

Its subcellular location is the secreted. In terms of biological role, together with the alpha chain CGA constitutes follitropin, the follicle-stimulating hormone, and provides its biological specificity to the hormone heterodimer. Binds FSHR, a G protein-coupled receptor, on target cells to activate downstream signaling pathways. Follitropin is involved in follicle development and spermatogenesis in reproductive organs. The chain is Follitropin subunit beta (FSHB) from Cervus nippon (Sika deer).